Here is a 243-residue protein sequence, read N- to C-terminus: Probable transcriptional regulatory protein BDI_1233 (243 aa).

The protein belongs to the TACO1 family.

It is found in the cytoplasm. The protein is Probable transcriptional regulatory protein BDI_1233 of Parabacteroides distasonis (strain ATCC 8503 / DSM 20701 / CIP 104284 / JCM 5825 / NCTC 11152).